A 371-amino-acid chain; its full sequence is DNA primase DnaG (371 aa).

A Toprim domain is found at 173-248 (DEIILVEGRA…DIDYVAVAPP (76 aa)). E179, D221, and D223 together coordinate Mg(2+).

It belongs to the archaeal DnaG primase family. As to quaternary structure, forms a ternary complex with MCM helicase and DNA. Component of the archaeal exosome complex. It depends on Mg(2+) as a cofactor.

The catalysed reaction is ssDNA + n NTP = ssDNA/pppN(pN)n-1 hybrid + (n-1) diphosphate.. Functionally, RNA polymerase that catalyzes the synthesis of short RNA molecules used as primers for DNA polymerase during DNA replication. Also part of the exosome, which is a complex involved in RNA degradation. Acts as a poly(A)-binding protein that enhances the interaction between heteromeric, adenine-rich transcripts and the exosome. This chain is DNA primase DnaG, found in Nanoarchaeum equitans (strain Kin4-M).